We begin with the raw amino-acid sequence, 329 residues long: Ketol-acid reductoisomerase (NADP(+)) (329 aa).

Positions 2 to 182 (TQLFYDTDAD…GGTRAGILET (181 aa)) constitute a KARI N-terminal Rossmann domain. NADP(+)-binding positions include 25 to 28 (YGSQ), Ser-51, Ser-53, and 83 to 86 (DEFQ). His-108 is an active-site residue. Gly-134 provides a ligand contact to NADP(+). One can recognise a KARI C-terminal knotted domain in the interval 183–328 (NFKEETETDL…KGLRAMFSWL (146 aa)). Residues Asp-191, Glu-195, Glu-227, and Glu-231 each contribute to the Mg(2+) site. Residue Ser-252 participates in substrate binding.

It belongs to the ketol-acid reductoisomerase family. Mg(2+) is required as a cofactor.

The enzyme catalyses (2R)-2,3-dihydroxy-3-methylbutanoate + NADP(+) = (2S)-2-acetolactate + NADPH + H(+). The catalysed reaction is (2R,3R)-2,3-dihydroxy-3-methylpentanoate + NADP(+) = (S)-2-ethyl-2-hydroxy-3-oxobutanoate + NADPH + H(+). Its pathway is amino-acid biosynthesis; L-isoleucine biosynthesis; L-isoleucine from 2-oxobutanoate: step 2/4. It functions in the pathway amino-acid biosynthesis; L-valine biosynthesis; L-valine from pyruvate: step 2/4. Its function is as follows. Involved in the biosynthesis of branched-chain amino acids (BCAA). Catalyzes an alkyl-migration followed by a ketol-acid reduction of (S)-2-acetolactate (S2AL) to yield (R)-2,3-dihydroxy-isovalerate. In the isomerase reaction, S2AL is rearranged via a Mg-dependent methyl migration to produce 3-hydroxy-3-methyl-2-ketobutyrate (HMKB). In the reductase reaction, this 2-ketoacid undergoes a metal-dependent reduction by NADPH to yield (R)-2,3-dihydroxy-isovalerate. The polypeptide is Ketol-acid reductoisomerase (NADP(+)) (Prochlorococcus marinus subsp. pastoris (strain CCMP1986 / NIES-2087 / MED4)).